A 246-amino-acid chain; its full sequence is Orotidine 5'-phosphate decarboxylase (246 aa).

Substrate-binding positions include Asp18, Lys39, 66–75 (DLKFHDIPAT), Thr130, Arg192, Gln201, Gly221, and Arg222. Residue Lys68 is the Proton donor of the active site.

It belongs to the OMP decarboxylase family. Type 1 subfamily. In terms of assembly, homodimer.

It carries out the reaction orotidine 5'-phosphate + H(+) = UMP + CO2. The protein operates within pyrimidine metabolism; UMP biosynthesis via de novo pathway; UMP from orotate: step 2/2. Its function is as follows. Catalyzes the decarboxylation of orotidine 5'-monophosphate (OMP) to uridine 5'-monophosphate (UMP). In Parasynechococcus marenigrum (strain WH8102), this protein is Orotidine 5'-phosphate decarboxylase.